The primary structure comprises 149 residues: Transcription antitermination protein NusB (149 aa).

Belongs to the NusB family.

In terms of biological role, involved in transcription antitermination. Required for transcription of ribosomal RNA (rRNA) genes. Binds specifically to the boxA antiterminator sequence of the ribosomal RNA (rrn) operons. In Acinetobacter baylyi (strain ATCC 33305 / BD413 / ADP1), this protein is Transcription antitermination protein NusB.